Reading from the N-terminus, the 115-residue chain is Large ribosomal subunit protein bL19 (115 aa).

It belongs to the bacterial ribosomal protein bL19 family.

Its function is as follows. This protein is located at the 30S-50S ribosomal subunit interface and may play a role in the structure and function of the aminoacyl-tRNA binding site. This Desulfovibrio desulfuricans (strain ATCC 27774 / DSM 6949 / MB) protein is Large ribosomal subunit protein bL19.